Here is a 607-residue protein sequence, read N- to C-terminus: Probable Ufm1-specific protease 2 (607 aa).

Catalysis depends on residues cysteine 440, aspartate 564, and histidine 566.

It belongs to the peptidase C78 family.

Thiol protease which recognizes and hydrolyzes the peptide bond at the C-terminal Gly of UFM1, a ubiquitin-like modifier protein bound to a number of target proteins. Does not hydrolyze SUMO1 or ISG15 ubiquitin-like proteins. The polypeptide is Probable Ufm1-specific protease 2 (Drosophila melanogaster (Fruit fly)).